We begin with the raw amino-acid sequence, 396 residues long: Probable glucan endo-1,6-beta-glucosidase B (396 aa).

The N-terminal stretch at 1-17 (MIRRLAAFSALSGLATA) is a signal peptide. An N-linked (GlcNAc...) asparagine glycan is attached at asparagine 30. Glutamate 219 functions as the Proton donor in the catalytic mechanism. A glycan (N-linked (GlcNAc...) asparagine) is linked at asparagine 272. The active-site Nucleophile is glutamate 320.

The protein belongs to the glycosyl hydrolase 5 (cellulase A) family.

Its subcellular location is the secreted. It catalyses the reaction Random hydrolysis of (1-&gt;6)-linkages in (1-&gt;6)-beta-D-glucans.. Beta-glucanases participate in the metabolism of beta-glucan, the main structural component of the cell wall. Acts on lutean, pustulan and 1,6-oligo-beta-D-glucosides. The chain is Probable glucan endo-1,6-beta-glucosidase B (exgB) from Aspergillus fumigatus (strain CBS 144.89 / FGSC A1163 / CEA10) (Neosartorya fumigata).